A 599-amino-acid chain; its full sequence is CAP-Gly domain-containing linker protein 4 (599 aa).

ANK repeat units lie at residues 65-101 (TSVSELFAILRQWVPQVQQNIDIIGNEILKRGCNVND), 149-180 (TNMNALHYASYFDVPELIRVLLKTSKPKDVDA), and 186-215 (NFGTALHIAAHNLCAGAVKTLLELGANPAF). Residues 303–345 (GTTEFASGQWAGIELDEPEGKNNGSVGRVQYFKCAPKYGIFAP) enclose the CAP-Gly 1 domain. The segment at 387–482 (SGLMTSKKEN…TSAANNTHRE (96 aa)) is disordered. The segment covering 443 to 462 (LSTSSSSGKKTLSKSPSLPS) has biased composition (low complexity). Residues 468-478 (LKSSTTSAANN) show a composition bias toward polar residues. The region spanning 505 to 547 (GTTNFAPGYWYGIELEKPHGKNDGSVGGVQYFSCSPRYGIFAP) is the CAP-Gly 2 domain. The residue at position 557 (Ser-557) is a Phosphoserine. A disordered region spans residues 565-599 (SSNKQNHSYPGFRRSFSTTSASSQKEINRRNAFAK). Over residues 576-587 (FRRSFSTTSASS) the composition is skewed to low complexity.

This Rattus norvegicus (Rat) protein is CAP-Gly domain-containing linker protein 4 (Clip4).